Here is a 326-residue protein sequence, read N- to C-terminus: uncharacterized protein (326 aa).

Serine 132 provides a ligand contact to substrate. Tyrosine 157 serves as the catalytic Proton acceptor.

The protein belongs to the NAD(P)-dependent epimerase/dehydratase family. dTDP-glucose dehydratase subfamily.

This is an uncharacterized protein from Methanocaldococcus jannaschii (strain ATCC 43067 / DSM 2661 / JAL-1 / JCM 10045 / NBRC 100440) (Methanococcus jannaschii).